The chain runs to 126 residues: Glycine cleavage system H protein (126 aa).

The Lipoyl-binding domain occupies 19 to 100; it reads DGKIGITDHA…AHAAWMVKVE (82 aa). K60 carries the post-translational modification N6-lipoyllysine.

It belongs to the GcvH family. As to quaternary structure, the glycine cleavage system is composed of four proteins: P, T, L and H. It depends on (R)-lipoate as a cofactor.

Its function is as follows. The glycine cleavage system catalyzes the degradation of glycine. The H protein shuttles the methylamine group of glycine from the P protein to the T protein. The chain is Glycine cleavage system H protein from Koribacter versatilis (strain Ellin345).